A 138-amino-acid polypeptide reads, in one-letter code: Actophorin (138 aa).

The region spanning 3–134 (GIQLADEVTS…NLDEVIAKVK (132 aa)) is the ADF-H domain.

Belongs to the actin-binding proteins ADF family. In terms of assembly, interacts with F-actin. Does not interact with G-actin. Interacts with 14-3-3 protein 3.

It localises to the cytoplasm. The protein localises to the cytoskeleton. Its subcellular location is the cell membrane. It is found in the cell projection. The protein resides in the phagocytic cup. It localises to the pseudopodium. In terms of biological role, actin-binding protein that severs actin filaments. This Entamoeba histolytica (strain ATCC 30459 / HM-1:IMSS / ABRM) protein is Actophorin.